The following is an 82-amino-acid chain: Turripeptide Gsp9.2 (82 aa).

The N-terminal stretch at methionine 1 to glycine 23 is a signal peptide. The propeptide occupies arginine 24–arginine 46. 4-hydroxyproline is present on residues proline 49 and proline 50. 3 disulfide bridges follow: cysteine 53/cysteine 68, cysteine 58/cysteine 72, and cysteine 64/cysteine 79. At glutamate 56 the chain carries 4-carboxyglutamate.

The protein belongs to the Pg turripeptide superfamily. Expressed by the venom duct.

The protein resides in the secreted. This chain is Turripeptide Gsp9.2, found in Gemmula speciosa (Splendid gem-turris).